A 957-amino-acid chain; its full sequence is Valine--tRNA ligase (957 aa).

The 'HIGH' region motif lies at 47–57; the sequence is PNITGQLHLGH. Residues 558–562 carry the 'KMSKS' region motif; the sequence is KMSKS. Residue K561 coordinates ATP. Positions 889 to 918 form a coiled coil; the sequence is FNKENEINRLKKESELINRKIETIQKLLDD.

It belongs to the class-I aminoacyl-tRNA synthetase family. ValS type 1 subfamily. Monomer.

It localises to the cytoplasm. The catalysed reaction is tRNA(Val) + L-valine + ATP = L-valyl-tRNA(Val) + AMP + diphosphate. Its function is as follows. Catalyzes the attachment of valine to tRNA(Val). As ValRS can inadvertently accommodate and process structurally similar amino acids such as threonine, to avoid such errors, it has a 'posttransfer' editing activity that hydrolyzes mischarged Thr-tRNA(Val) in a tRNA-dependent manner. The chain is Valine--tRNA ligase from Blochmanniella pennsylvanica (strain BPEN).